The chain runs to 363 residues: 3-isopropylmalate dehydrogenase (363 aa).

NAD(+) is bound at residue 78–91 (GPKWEHLPPDQQPE). Substrate contacts are provided by arginine 99, arginine 109, arginine 138, and aspartate 227. Residues aspartate 227, aspartate 251, and aspartate 255 each contribute to the Mg(2+) site. 285–297 (GSAPDIAGKNIAN) is a binding site for NAD(+).

It belongs to the isocitrate and isopropylmalate dehydrogenases family. LeuB type 1 subfamily. As to quaternary structure, homodimer. It depends on Mg(2+) as a cofactor. Mn(2+) serves as cofactor.

The protein resides in the cytoplasm. The enzyme catalyses (2R,3S)-3-isopropylmalate + NAD(+) = 4-methyl-2-oxopentanoate + CO2 + NADH. It participates in amino-acid biosynthesis; L-leucine biosynthesis; L-leucine from 3-methyl-2-oxobutanoate: step 3/4. Functionally, catalyzes the oxidation of 3-carboxy-2-hydroxy-4-methylpentanoate (3-isopropylmalate) to 3-carboxy-4-methyl-2-oxopentanoate. The product decarboxylates to 4-methyl-2 oxopentanoate. This is 3-isopropylmalate dehydrogenase from Shigella flexneri.